A 252-amino-acid chain; its full sequence is Hydroxyacylglutathione hydrolase (252 aa).

Positions 54, 56, 58, 59, 111, 128, and 166 each coordinate Zn(2+).

Belongs to the metallo-beta-lactamase superfamily. Glyoxalase II family. As to quaternary structure, monomer. Requires Zn(2+) as cofactor.

The enzyme catalyses an S-(2-hydroxyacyl)glutathione + H2O = a 2-hydroxy carboxylate + glutathione + H(+). It functions in the pathway secondary metabolite metabolism; methylglyoxal degradation; (R)-lactate from methylglyoxal: step 2/2. Thiolesterase that catalyzes the hydrolysis of S-D-lactoyl-glutathione to form glutathione and D-lactic acid. The protein is Hydroxyacylglutathione hydrolase of Photobacterium profundum (strain SS9).